Here is an 80-residue protein sequence, read N- to C-terminus: MKSFLLIALVLFFLFVSYASAKKKCQLPSDVGKGKASFTRYYYNEESGKCETFIYGGVGGNSNNFLTKEDCCRECAQGSC.

An N-terminal signal peptide occupies residues 1 to 21; it reads MKSFLLIALVLFFLFVSYASA. One can recognise a BPTI/Kunitz inhibitor domain in the interval 25-75; it reads CQLPSDVGKGKASFTRYYYNEESGKCETFIYGGVGGNSNNFLTKEDCCREC. 3 cysteine pairs are disulfide-bonded: Cys25/Cys75, Cys50/Cys71, and Cys72/Cys80.

Belongs to the venom Kunitz-type family. Scorpion delta-Ktx subfamily. Delta-Ktx 2 sub-subfamily. Lacks the conserved CysII-CysIV disulfide bond but contains 2 cysteine residues at the C-terminus that generate a new disulfide bond. As to expression, expressed by the venom gland.

Its subcellular location is the secreted. In terms of biological role, serine protease inhibitor that inhibits trypsin at a molar ratio of 1:1 (Ki=140 nM). This chain is Kunitz-type serine protease inhibitor LmKTT-1a, found in Lychas mucronatus (Chinese swimming scorpion).